A 54-amino-acid chain; its full sequence is Zinc-containing ferredoxin A (54 aa).

The disordered stretch occupies residues 1–21 (GIDPNYRTSRPEVGTHEGHKV). An N-terminal extension region spans residues 1–36 (GIDPNYRTSRPEVGTHEGHKVYGPVENPKVLGIHGA). Residues 9–20 (SRPEVGTHEGHK) show a composition bias toward basic and acidic residues. His-16 and His-19 together coordinate Zn(2+). Position 29 is an N6-methyllysine (Lys-29). Zn(2+) is bound at residue His-34. A 4Fe-4S ferredoxin-type 1 domain is found at 35–54 (GAIVGVDFDLCIADGSCINA). 2 residues coordinate [3Fe-4S] cluster: Cys-45 and Cys-51.

The cofactor is [3Fe-4S] cluster. [4Fe-4S] cluster is required as a cofactor. It depends on Zn(2+) as a cofactor.

Functionally, ferredoxins are iron-sulfur proteins that transfer electrons in a wide variety of metabolic reactions. This is Zinc-containing ferredoxin A (zfx) from Sulfuracidifex metallicus (Sulfolobus metallicus).